Here is a 79-residue protein sequence, read N- to C-terminus: Large ribosomal subunit protein eL38 (79 aa).

It belongs to the eukaryotic ribosomal protein eL38 family.

In Theileria parva (East coast fever infection agent), this protein is Large ribosomal subunit protein eL38 (RPL38).